Here is a 640-residue protein sequence, read N- to C-terminus: RAP domain-containing protein, chloroplastic (640 aa).

The transit peptide at 1 to 32 directs the protein to the chloroplast; it reads MEAALLRPPPLAARGGVSIAIAFSVSRLPSAA. The segment at 111–158 is disordered; it reads SLQRMVASPKKKNKKKKSKKTNLKQKKAAEPKPPRDTDDDEDDEEEAD. The span at 119 to 136 shows a compositional bias: basic residues; sequence PKKKNKKKKSKKTNLKQK. The segment covering 137 to 146 has biased composition (basic and acidic residues); the sequence is KAAEPKPPRD. Positions 147 to 158 are enriched in acidic residues; that stretch reads TDDDEDDEEEAD. The region spanning 575 to 633 is the RAP domain; it reads LAFEIDGPSHFSRNLGTPLGHTAFKRRYIAAAGWNLVSLSHQEWENLEGEFEQLEYLRR.

In terms of tissue distribution, expressed in roots, leaf sheaths, veins of leaf blade, mature leaves, endodermis of culm, panicles and anthers.

The protein localises to the plastid. The protein resides in the chloroplast. In terms of biological role, probable RNA-binding protein that plays an essential role in chloroplast development. Regulates the ribosomal proteins homeostasis and ribosomal RNA development in chloroplasts. Involved the regulation of 16S rRNA and required for the expression of chloroplast-associated photosynthetic genes. The sequence is that of RAP domain-containing protein, chloroplastic from Oryza sativa subsp. japonica (Rice).